The chain runs to 139 residues: MATRHQAREAVIGLLYAYDLGNPEIKKFAEDILEEKKIRNKQREFALALFKGTVEHLDTIDEMIKKHLESWDMERVGHIERAILRLGVYELFYTDLDPAIVINEAVELAKKLGTDQSPKFINGVLDAIAKEVKNGSQKA.

The protein belongs to the NusB family.

Its function is as follows. Involved in transcription antitermination. Required for transcription of ribosomal RNA (rRNA) genes. Binds specifically to the boxA antiterminator sequence of the ribosomal RNA (rrn) operons. The polypeptide is Transcription antitermination protein NusB (Nitratiruptor sp. (strain SB155-2)).